A 360-amino-acid polypeptide reads, in one-letter code: uncharacterized protein (360 aa).

The ABC transporter domain maps to 4–235 (LSLQHIQKIY…PANMFVAGFI (232 aa)). 37 to 44 (GPSGCGKS) lines the ATP pocket.

Belongs to the ABC transporter superfamily.

This is an uncharacterized protein from Escherichia coli O6:K15:H31 (strain 536 / UPEC).